A 418-amino-acid chain; its full sequence is 3-deoxy-D-manno-octulosonic acid transferase (418 aa).

The chain crosses the membrane as a helical; Signal-anchor span at residues 7 to 27 (FLSFLLLPIYFVIIFIRLLIG). Glutamate 60 acts as the Proton acceptor in catalysis. CMP contacts are provided by residues 264–265 (PR), 305–307 (FGE), and 330–333 (NILE).

This sequence belongs to the glycosyltransferase group 1 family. Glycosyltransferase 30 subfamily.

The protein localises to the cell inner membrane. The catalysed reaction is lipid IVA (E. coli) + CMP-3-deoxy-beta-D-manno-octulosonate = alpha-Kdo-(2-&gt;6)-lipid IVA (E. coli) + CMP + H(+). It participates in bacterial outer membrane biogenesis; LPS core biosynthesis. Involved in lipopolysaccharide (LPS) biosynthesis. Catalyzes the transfer of 3-deoxy-D-manno-octulosonate (Kdo) residue(s) from CMP-Kdo to lipid IV(A), the tetraacyldisaccharide-1,4'-bisphosphate precursor of lipid A. The chain is 3-deoxy-D-manno-octulosonic acid transferase (waaA) from Rickettsia bellii (strain RML369-C).